Reading from the N-terminus, the 492-residue chain is MDAMKYHDLRDFLTLLEQQGELKRITLPVDPHLEITEIADRTLRAGGPALLFENPKGYAMPVLCNLFGTPKRVAMGMGQDDVSALREVGKLLAFLKEPEPPKGFRDLFDKLPQFKQVLNMPTKRLRGAPCQQKIASGDDVDLTRLPVMTCWPDDAAPLITWGLTVTRGPHKERQNLGIYRQQLIGKNKLIMRWLSHRGGALDFQEWLAARPGERFPVSVALGADPATILGAVTPVPDTLSEYAFAGLLRGTKTEVVKCLSNDLEVPASAEIILEGYIEPGEMAPEGPYGDHTGYYNEVDSFPVFTVTHITQREDAIYHSTYTGRPPDEPAVLGVALNEVFVPILQKQFPEIVDFYLPPEGCSYRLAVVTMKKQYAGHAKRVMMGVWSFLRQFMYTKFVIVCDDDVNARDWNDVIWAITTRMDPARDTVLVENTPIDYLDFASPVSGLGSKMGLDATNKWPGETQREWGRPIVKDPEVTARIDAIWDELAIFK.

Residue Asn-175 participates in Mn(2+) binding. Prenylated FMN is bound by residues 178 to 180 (IYR), 192 to 194 (RWL), and 197 to 198 (RG). Glu-241 provides a ligand contact to Mn(2+). Catalysis depends on Asp-290, which acts as the Proton donor.

This sequence belongs to the UbiD family. In terms of assembly, homohexamer. Prenylated FMN serves as cofactor. It depends on Mn(2+) as a cofactor.

The protein resides in the cell membrane. The catalysed reaction is a 4-hydroxy-3-(all-trans-polyprenyl)benzoate + H(+) = a 2-(all-trans-polyprenyl)phenol + CO2. It functions in the pathway cofactor biosynthesis; ubiquinone biosynthesis. Its function is as follows. Catalyzes the decarboxylation of 3-octaprenyl-4-hydroxy benzoate to 2-octaprenylphenol, an intermediate step in ubiquinone biosynthesis. The protein is 3-octaprenyl-4-hydroxybenzoate carboxy-lyase of Salmonella typhimurium (strain LT2 / SGSC1412 / ATCC 700720).